The chain runs to 152 residues: SsrA-binding protein (152 aa).

Basic and acidic residues predominate over residues 129-140 (KREDMKKKDSQR). The segment at 129 to 152 (KREDMKKKDSQRELSQALKSKNRE) is disordered. Positions 141–152 (ELSQALKSKNRE) are enriched in polar residues.

Belongs to the SmpB family.

The protein resides in the cytoplasm. In terms of biological role, required for rescue of stalled ribosomes mediated by trans-translation. Binds to transfer-messenger RNA (tmRNA), required for stable association of tmRNA with ribosomes. tmRNA and SmpB together mimic tRNA shape, replacing the anticodon stem-loop with SmpB. tmRNA is encoded by the ssrA gene; the 2 termini fold to resemble tRNA(Ala) and it encodes a 'tag peptide', a short internal open reading frame. During trans-translation Ala-aminoacylated tmRNA acts like a tRNA, entering the A-site of stalled ribosomes, displacing the stalled mRNA. The ribosome then switches to translate the ORF on the tmRNA; the nascent peptide is terminated with the 'tag peptide' encoded by the tmRNA and targeted for degradation. The ribosome is freed to recommence translation, which seems to be the essential function of trans-translation. The sequence is that of SsrA-binding protein from Pelobacter propionicus (strain DSM 2379 / NBRC 103807 / OttBd1).